Reading from the N-terminus, the 305-residue chain is Serine/threonine-protein phosphatase 4 catalytic subunit (305 aa).

Residues D52, H54, D80, and N112 each contribute to the Mn(2+) site. H113 serves as the catalytic Proton donor. Residues H162 and H236 each contribute to the Mn(2+) site.

This sequence belongs to the PPP phosphatase family. PP-4 (PP-X) subfamily. Serine/threonine-protein phosphatase 4 (PP4) occurs in different assemblies of the catalytic and one or more regulatory subunits. Probably part of a PP4 complex containing ppp4c and ppp4r2. Interacts with smkA. The cofactor is Mn(2+).

It localises to the cytoplasm. It is found in the nucleus. The catalysed reaction is O-phospho-L-seryl-[protein] + H2O = L-seryl-[protein] + phosphate. It catalyses the reaction O-phospho-L-threonyl-[protein] + H2O = L-threonyl-[protein] + phosphate. Required for development, chemotaxis and the expression of numerous genes. This chain is Serine/threonine-protein phosphatase 4 catalytic subunit (ppp4c), found in Dictyostelium discoideum (Social amoeba).